We begin with the raw amino-acid sequence, 225 residues long: 7-cyano-7-deazaguanine synthase (225 aa).

An ATP-binding site is contributed by 9-19 (LSGGLDSATCL). The Zn(2+) site is built by Cys189, Cys199, Cys202, and Cys205.

The protein belongs to the QueC family. Zn(2+) is required as a cofactor.

The catalysed reaction is 7-carboxy-7-deazaguanine + NH4(+) + ATP = 7-cyano-7-deazaguanine + ADP + phosphate + H2O + H(+). The protein operates within purine metabolism; 7-cyano-7-deazaguanine biosynthesis. Its function is as follows. Catalyzes the ATP-dependent conversion of 7-carboxy-7-deazaguanine (CDG) to 7-cyano-7-deazaguanine (preQ(0)). In Dechloromonas aromatica (strain RCB), this protein is 7-cyano-7-deazaguanine synthase.